A 95-amino-acid chain; its full sequence is Co-chaperonin GroES (95 aa).

It belongs to the GroES chaperonin family. In terms of assembly, heptamer of 7 subunits arranged in a ring. Interacts with the chaperonin GroEL.

It is found in the cytoplasm. Functionally, together with the chaperonin GroEL, plays an essential role in assisting protein folding. The GroEL-GroES system forms a nano-cage that allows encapsulation of the non-native substrate proteins and provides a physical environment optimized to promote and accelerate protein folding. GroES binds to the apical surface of the GroEL ring, thereby capping the opening of the GroEL channel. The polypeptide is Co-chaperonin GroES (Rickettsia conorii (strain ATCC VR-613 / Malish 7)).